The chain runs to 476 residues: Glycogen synthase (476 aa).

An ADP-alpha-D-glucose-binding site is contributed by Lys15.

This sequence belongs to the glycosyltransferase 1 family. Bacterial/plant glycogen synthase subfamily.

The catalysed reaction is [(1-&gt;4)-alpha-D-glucosyl](n) + ADP-alpha-D-glucose = [(1-&gt;4)-alpha-D-glucosyl](n+1) + ADP + H(+). The protein operates within glycan biosynthesis; glycogen biosynthesis. Its function is as follows. Synthesizes alpha-1,4-glucan chains using ADP-glucose. This is Glycogen synthase from Actinobacillus succinogenes (strain ATCC 55618 / DSM 22257 / CCUG 43843 / 130Z).